Consider the following 875-residue polypeptide: Valine--tRNA ligase (875 aa).

The short motif at 44-54 is the 'HIGH' region element; the sequence is PNVTGKLHLGH. The 'KMSKS' region motif lies at 520-524; sequence KMSKS. K523 lines the ATP pocket. Residues 804–875 are a coiled coil; the sequence is LEGLINIEEE…VRARLAQLKQ (72 aa).

The protein belongs to the class-I aminoacyl-tRNA synthetase family. ValS type 1 subfamily. In terms of assembly, monomer.

The protein resides in the cytoplasm. It catalyses the reaction tRNA(Val) + L-valine + ATP = L-valyl-tRNA(Val) + AMP + diphosphate. Catalyzes the attachment of valine to tRNA(Val). As ValRS can inadvertently accommodate and process structurally similar amino acids such as threonine, to avoid such errors, it has a 'posttransfer' editing activity that hydrolyzes mischarged Thr-tRNA(Val) in a tRNA-dependent manner. The polypeptide is Valine--tRNA ligase (Anoxybacillus flavithermus (strain DSM 21510 / WK1)).